A 120-amino-acid chain; its full sequence is MFCVCLTLKIVYFDLIRPMCSLRRLYRRLRLVARLRREYRLRGLARYSGMMGSGFLWAGTKPLQAPYILLPAPVLRTPHPTRKLQTPLNEPPRTWRKTATTHTRGGSSLLITLPLKITVP.

The disordered stretch occupies residues 80-99 (PTRKLQTPLNEPPRTWRKTA).

This is an uncharacterized protein from Goose circovirus (GoCV).